Here is a 155-residue protein sequence, read N- to C-terminus: Ribosomal RNA large subunit methyltransferase H (155 aa).

Residues Leu72, Gly103, and Leu122–Leu127 contribute to the S-adenosyl-L-methionine site.

This sequence belongs to the RNA methyltransferase RlmH family. In terms of assembly, homodimer.

It is found in the cytoplasm. The catalysed reaction is pseudouridine(1915) in 23S rRNA + S-adenosyl-L-methionine = N(3)-methylpseudouridine(1915) in 23S rRNA + S-adenosyl-L-homocysteine + H(+). Specifically methylates the pseudouridine at position 1915 (m3Psi1915) in 23S rRNA. In Acidovorax ebreus (strain TPSY) (Diaphorobacter sp. (strain TPSY)), this protein is Ribosomal RNA large subunit methyltransferase H.